Here is a 352-residue protein sequence, read N- to C-terminus: MSIFDVAVWDEAEHCARMLDQRRLPNEVVNLYYRSAAEMADGIRDMVVRGAPAIGCACAYGVAVEAKRLAKQGIPSHWPTAMAEGMATLRQSRPTAVNLTWALERMAPLLETTPPHEVPQRLLQEAHAIREEDIASCRAMGAHGAALLPTNSQRPTVIMTHCNAGALATAGYGTALGVIRAAHTAQQGNLRVIANETRPYLQGARLTAWELLQDHIDTTLITDNMAGWLMANGEVDAVVVGSDRVAANGDVANKIGTYTLAVLARRHDIPFFVAAPLSTVDLRCPTGREIPIEERSANEVTHCMGIRSAADGVKVRNPAFDVTPAELITAFICEKGVAKAPDQEKIAKLFQI.

Substrate-binding positions include 49–51, R93, and Q202; that span reads RGA. D243 functions as the Proton donor in the catalytic mechanism. 253–254 provides a ligand contact to substrate; that stretch reads NK.

This sequence belongs to the eIF-2B alpha/beta/delta subunits family. MtnA subfamily.

It catalyses the reaction 5-(methylsulfanyl)-alpha-D-ribose 1-phosphate = 5-(methylsulfanyl)-D-ribulose 1-phosphate. Its pathway is amino-acid biosynthesis; L-methionine biosynthesis via salvage pathway; L-methionine from S-methyl-5-thio-alpha-D-ribose 1-phosphate: step 1/6. Catalyzes the interconversion of methylthioribose-1-phosphate (MTR-1-P) into methylthioribulose-1-phosphate (MTRu-1-P). This chain is Methylthioribose-1-phosphate isomerase, found in Magnetococcus marinus (strain ATCC BAA-1437 / JCM 17883 / MC-1).